The chain runs to 727 residues: MTDSLEYNDINAEVRGVLSSGRLKLTDQNIIFKNNKTGKVEQISVDDIDLINSQKFVGTWGLRVFTKSGALHRFTGFRDSEHEKLGKFIKDAYSQEMVEKEMCVKGWNWGTARFMGSVLSFDKDSKTIFEVPLSHVSQCVTGKNEVTLEYHQNDDAPVGLLEMRFHIPAVESADDDPVEKFHQNVMSKASVISASGESIAIFREIQILTPRGRYDIKIFSTFFQLHGKTFDYKIPMDSVLRLFMLPHKDSRQMFFVLSLDPPIKQGQTRYHYLVLLFAPDEETTIELPFSEAELRDKYEGKLEKELSGPVYEVMGKVMKVLIGRKITGPGNFIGHSGTAAVGCSFKAAAGYLYPLERGFIYIHKPPLHIRFEEISSVNFARSGGSTRSFDFEVTLKNGTVHIFSSIEKEEYAKLFDFITQKKLHVSNMGKDKSGYKDVDFGDSDNENEPDAYLARLKAEAREKEEEDDDGDDSDEESTDEDFKPNENESDVAEEYDSNVEDDSDDDSDASGGGGDGGTDGSTKKKHKEKKNEKKEKTHKEKEKIKKPTKKKDTGKPKRGTSAFMLWLNDTRESIKRENPGIKVTEIAKKGGEMWKELKDKSKWEEAANKDKIRYQEEMRNYKSGAGGGSEDEKGGTSKATKKRKSEPSPSKKANTSGSGFKSKEYISDDESTSDDQEKVKEIPKKKNKSTAEDKDKNSKKSESEGGDSDDASNASEDDDEEEDEGSD.

Disordered regions lie at residues Ala458–Leu565 and Glu596–Asp727. 2 stretches are compositionally biased toward acidic residues: residues Glu464–Asp479 and Asn487–Asp508. Over residues Ser510–Asp519 the composition is skewed to gly residues. 3 stretches are compositionally biased toward basic and acidic residues: residues Lys529–Lys555, Glu596–Asn620, and Asp675–Ser703. The segment at residues Pro556 to Lys622 is a DNA-binding region (HMG box). Acidic residues predominate over residues Glu704–Asp727.

It belongs to the SSRP1 family. In terms of assembly, component of the FACT complex, a stable heterodimer of dre4/spt16 and Ssrp.

Its subcellular location is the nucleus. The protein localises to the chromosome. The protein resides in the nucleolus. Its function is as follows. Component of the FACT complex, a general chromatin factor that acts to reorganize nucleosomes. The FACT complex is involved in multiple processes that require DNA as a template such as mRNA elongation, DNA replication and DNA repair. During transcription elongation the FACT complex acts as a histone chaperone that both destabilizes and restores nucleosomal structure. It facilitates the passage of RNA polymerase II and transcription by promoting the dissociation of one histone H2A-H2B dimer from the nucleosome, then subsequently promotes the reestablishment of the nucleosome following the passage of RNA polymerase II. Binds specifically to single-stranded DNA and RNA with highest affinity for nucleotides G and U. The FACT complex is required for expression of Hox genes. The chain is FACT complex subunit Ssrp1 (Ssrp) from Drosophila pseudoobscura pseudoobscura (Fruit fly).